A 320-amino-acid polypeptide reads, in one-letter code: Phospho-N-acetylmuramoyl-pentapeptide-transferase (320 aa).

9 consecutive transmembrane segments (helical) span residues leucine 5 to phenylalanine 25, methionine 51 to tyrosine 71, glycine 76 to isoleucine 96, valine 124 to isoleucine 144, glycine 145 to serine 165, glycine 176 to methionine 196, asparagine 198 to phenylalanine 218, leucine 233 to phenylalanine 255, and tryptophan 298 to tyrosine 318.

Belongs to the glycosyltransferase 4 family. MraY subfamily. It depends on Mg(2+) as a cofactor.

The protein localises to the cell membrane. It catalyses the reaction UDP-N-acetyl-alpha-D-muramoyl-L-alanyl-gamma-D-glutamyl-L-lysyl-D-alanyl-D-alanine + di-trans,octa-cis-undecaprenyl phosphate = Mur2Ac(oyl-L-Ala-gamma-D-Glu-L-Lys-D-Ala-D-Ala)-di-trans,octa-cis-undecaprenyl diphosphate + UMP. The protein operates within cell wall biogenesis; peptidoglycan biosynthesis. Functionally, catalyzes the initial step of the lipid cycle reactions in the biosynthesis of the cell wall peptidoglycan: transfers peptidoglycan precursor phospho-MurNAc-pentapeptide from UDP-MurNAc-pentapeptide onto the lipid carrier undecaprenyl phosphate, yielding undecaprenyl-pyrophosphoryl-MurNAc-pentapeptide, known as lipid I. This is Phospho-N-acetylmuramoyl-pentapeptide-transferase from Leuconostoc citreum (strain KM20).